Reading from the N-terminus, the 481-residue chain is Glutamyl-tRNA(Gln) amidotransferase subunit A (481 aa).

Catalysis depends on charge relay system residues K79 and S154. The tract at residues S136 to G157 is disordered. The active-site Acyl-ester intermediate is the S178.

This sequence belongs to the amidase family. GatA subfamily. As to quaternary structure, heterotrimer of A, B and C subunits.

The catalysed reaction is L-glutamyl-tRNA(Gln) + L-glutamine + ATP + H2O = L-glutaminyl-tRNA(Gln) + L-glutamate + ADP + phosphate + H(+). Allows the formation of correctly charged Gln-tRNA(Gln) through the transamidation of misacylated Glu-tRNA(Gln) in organisms which lack glutaminyl-tRNA synthetase. The reaction takes place in the presence of glutamine and ATP through an activated gamma-phospho-Glu-tRNA(Gln). The sequence is that of Glutamyl-tRNA(Gln) amidotransferase subunit A from Lachnospira eligens (strain ATCC 27750 / DSM 3376 / VPI C15-48 / C15-B4) (Eubacterium eligens).